Reading from the N-terminus, the 102-residue chain is Protein iss (102 aa).

Its function is as follows. Increases serum survival and confers group II surface exclusion. The sequence is that of Protein iss (iss) from Escherichia coli.